The chain runs to 236 residues: Leucyl/phenylalanyl-tRNA--protein transferase (236 aa).

Belongs to the L/F-transferase family.

Its subcellular location is the cytoplasm. The enzyme catalyses N-terminal L-lysyl-[protein] + L-leucyl-tRNA(Leu) = N-terminal L-leucyl-L-lysyl-[protein] + tRNA(Leu) + H(+). The catalysed reaction is N-terminal L-arginyl-[protein] + L-leucyl-tRNA(Leu) = N-terminal L-leucyl-L-arginyl-[protein] + tRNA(Leu) + H(+). It carries out the reaction L-phenylalanyl-tRNA(Phe) + an N-terminal L-alpha-aminoacyl-[protein] = an N-terminal L-phenylalanyl-L-alpha-aminoacyl-[protein] + tRNA(Phe). In terms of biological role, functions in the N-end rule pathway of protein degradation where it conjugates Leu, Phe and, less efficiently, Met from aminoacyl-tRNAs to the N-termini of proteins containing an N-terminal arginine or lysine. In Shewanella woodyi (strain ATCC 51908 / MS32), this protein is Leucyl/phenylalanyl-tRNA--protein transferase.